We begin with the raw amino-acid sequence, 208 residues long: Thymidylate kinase (208 aa).

Residue 11 to 18 coordinates ATP; that stretch reads GGEGVGKS.

This sequence belongs to the thymidylate kinase family.

It carries out the reaction dTMP + ATP = dTDP + ADP. Its function is as follows. Phosphorylation of dTMP to form dTDP in both de novo and salvage pathways of dTTP synthesis. This chain is Thymidylate kinase, found in Methylococcus capsulatus (strain ATCC 33009 / NCIMB 11132 / Bath).